We begin with the raw amino-acid sequence, 321 residues long: L-Ala-D/L-Glu epimerase (321 aa).

Substrate-binding residues include threonine 124 and lysine 149. The active-site Proton acceptor; specific for (R)-substrate epimerization is lysine 151. Mg(2+) contacts are provided by aspartate 176, glutamate 202, and aspartate 225. Lysine 247 (proton acceptor; specific for (S)-substrate epimerization) is an active-site residue. Substrate-binding residues include cysteine 275, aspartate 297, and aspartate 299.

The protein belongs to the mandelate racemase/muconate lactonizing enzyme family. Monomer. Requires Mg(2+) as cofactor.

The enzyme catalyses L-alanyl-L-glutamate = L-alanyl-D-glutamate. The protein operates within cell wall biogenesis; peptidoglycan recycling. Catalyzes the epimerization of L-Ala-D-Glu to L-Ala-L-Glu and has a role in the recycling of the murein peptide, of which L-Ala-D-Glu is a component. Is also able to catalyze the reverse reaction and the epimerization of all the L-Ala-X dipeptides, except L-Ala-L-Arg, L-Ala-L-Lys and L-Ala-L-Pro. Is also active with L-Gly-L-Glu, L-Phe-L-Glu, and L-Ser-L-Glu, but not with L-Glu-L-Glu, L-Lys-L-Glu, L-Pro-L-Glu, L-Lys-L-Ala, or D-Ala-D-Ala. This is L-Ala-D/L-Glu epimerase (ycjG) from Escherichia coli (strain K12).